A 339-amino-acid polypeptide reads, in one-letter code: MGYIKFQKDRKFEIVPIGRVAIDFNPIDINRPLSESKTFKKYLGGSPANIAVGLSRLGKKVGFIGKVSKDQFGKFVVDYFDNEGIDTSQIKYAENGESLGLTFTEIASPTESSILMYRNGIADLELDVNEIDEEYIKNTKAIVISGTALAKSPSREAALKALELAKKNDTIVIFDVDYREYNWKNKDEIAIYYSIVGKQSDIVMGSREEFDLMESLIVKEKSTDEESAKRWLGFGNKIVVIKHGKEGSTAYTNDRKSYKIKPFPVKLLKSFGGGDAYASAFIYGILEEWDIMDALEFGSASAAMLVASHSCSEDMPTVKEINEFIKEKKEQYGEMIARG.

It belongs to the carbohydrate kinase PfkB family.

It catalyses the reaction 5-dehydro-2-deoxy-D-gluconate + ATP = 6-phospho-5-dehydro-2-deoxy-D-gluconate + ADP + H(+). The protein operates within polyol metabolism; myo-inositol degradation into acetyl-CoA; acetyl-CoA from myo-inositol: step 5/7. Its function is as follows. Catalyzes the phosphorylation of 5-dehydro-2-deoxy-D-gluconate (2-deoxy-5-keto-D-gluconate or DKG) to 6-phospho-5-dehydro-2-deoxy-D-gluconate (DKGP). This chain is 5-dehydro-2-deoxygluconokinase, found in Clostridium botulinum (strain Eklund 17B / Type B).